The sequence spans 408 residues: ATP phosphoribosyltransferase regulatory subunit (408 aa).

The protein belongs to the class-II aminoacyl-tRNA synthetase family. HisZ subfamily. In terms of assembly, heteromultimer composed of HisG and HisZ subunits.

It localises to the cytoplasm. It functions in the pathway amino-acid biosynthesis; L-histidine biosynthesis; L-histidine from 5-phospho-alpha-D-ribose 1-diphosphate: step 1/9. Required for the first step of histidine biosynthesis. May allow the feedback regulation of ATP phosphoribosyltransferase activity by histidine. The sequence is that of ATP phosphoribosyltransferase regulatory subunit from Gloeothece citriformis (strain PCC 7424) (Cyanothece sp. (strain PCC 7424)).